The sequence spans 489 residues: Putative general secretion pathway protein A (489 aa).

26–33 (GEAGSGKT) is a binding site for ATP. The helical transmembrane segment at 237 to 257 (MQLAVVMSGTIIALTCGWLLL) threads the bilayer.

It belongs to the ExeA family.

It is found in the cell membrane. Functionally, may play a regulatory role under conditions of derepressed gsp gene expression. The polypeptide is Putative general secretion pathway protein A (gspA) (Escherichia coli (strain K12)).